Here is a 151-residue protein sequence, read N- to C-terminus: Deoxyuridine 5'-triphosphate nucleotidohydrolase (151 aa).

Substrate contacts are provided by residues arginine 70 to glycine 72, asparagine 83, leucine 87 to aspartate 89, and methionine 97.

This sequence belongs to the dUTPase family. It depends on Mg(2+) as a cofactor.

The enzyme catalyses dUTP + H2O = dUMP + diphosphate + H(+). It participates in pyrimidine metabolism; dUMP biosynthesis; dUMP from dCTP (dUTP route): step 2/2. Its function is as follows. This enzyme is involved in nucleotide metabolism: it produces dUMP, the immediate precursor of thymidine nucleotides and it decreases the intracellular concentration of dUTP so that uracil cannot be incorporated into DNA. The polypeptide is Deoxyuridine 5'-triphosphate nucleotidohydrolase (Azotobacter vinelandii (strain DJ / ATCC BAA-1303)).